A 155-amino-acid chain; its full sequence is Vasotocin-neurophysin VT 1 (155 aa).

The N-terminal stretch at 1–20 (MPDSTIPLLCVLGLLALSSA) is a signal peptide. Cys-21 and Cys-26 are disulfide-bonded. Gly-29 carries the post-translational modification Glycine amide. 7 disulfides stabilise this stretch: Cys-41–Cys-85, Cys-44–Cys-58, Cys-52–Cys-75, Cys-59–Cys-65, Cys-92–Cys-105, Cys-99–Cys-117, and Cys-106–Cys-111.

It belongs to the vasopressin/oxytocin family. In terms of processing, seven disulfide bonds are present in neurophysin.

The protein localises to the secreted. Functionally, vasotocin is probably an antidiuretic hormone. The protein is Vasotocin-neurophysin VT 1 of Oncorhynchus masou (Cherry salmon).